The chain runs to 311 residues: MSYQDLKECKIITAFITPFHEDGSINFDAIPALIEHLLAHHTDGILLAGTTAESPTLTHDEELELFAAVQKVVNGRVPLIAGVGTNDTRDSIEFVKEVAEFGGFAAGLAIVPYYNKPSQEGMYQHFKTIADASDLPIIIYNIPGRVVVELTPETMLRLADHPNIIGVKECTSLANMAYLIEHKPEEFLIYTGEDGDAFHAMNLGADGVISVASHTNGDEMHEMFTAIAESDMKKAAAIQRKFIPKVNALFSYPSPAPVKAILNYMGFEAGPTRLPLVPAPEEDAKRIIKVVVDGDYEATKATVTGVLRPDY.

Pyruvate is bound at residue Thr51. Tyr140 acts as the Proton donor/acceptor in catalysis. Lys168 functions as the Schiff-base intermediate with substrate in the catalytic mechanism. Ile209 provides a ligand contact to pyruvate.

The protein belongs to the DapA family. As to quaternary structure, homotetramer; dimer of dimers.

Its subcellular location is the cytoplasm. It carries out the reaction L-aspartate 4-semialdehyde + pyruvate = (2S,4S)-4-hydroxy-2,3,4,5-tetrahydrodipicolinate + H2O + H(+). The protein operates within amino-acid biosynthesis; L-lysine biosynthesis via DAP pathway; (S)-tetrahydrodipicolinate from L-aspartate: step 3/4. In terms of biological role, catalyzes the condensation of (S)-aspartate-beta-semialdehyde [(S)-ASA] and pyruvate to 4-hydroxy-tetrahydrodipicolinate (HTPA). This is 4-hydroxy-tetrahydrodipicolinate synthase from Streptococcus pneumoniae (strain 70585).